The primary structure comprises 311 residues: Phospholipid phosphatase 3 (311 aa).

At 1–33 the chain is on the cytoplasmic side; sequence MQNYKYDKAIVPESKNGGSPALNNNPRRSGSKR. Ser-19 is subject to Phosphoserine. The helical transmembrane segment at 34–54 threads the bilayer; the sequence is VLLICLDLFCLFMAGLPFLII. Residues 55 to 85 lie on the Extracellular side of the membrane; the sequence is ETSTIKPYHRGFYCNDESIKYPLKTGETIND. A helical membrane pass occupies residues 86 to 106; that stretch reads AVLCAVGIVIAILAIITGEFY. Topologically, residues 107–122 are cytoplasmic; it reads RIYYLKKSRSTIQNPY. A Dityrosine basolateral targeting motif motif is present at residues 109-110; sequence YY. Residues 123 to 143 form a helical membrane-spanning segment; the sequence is VAALYKQVGCFLFGCAISQSF. At 144–193 the chain is on the extracellular side; sequence TDIAKVSIGRLRPHFLSVCNPDFSQINCSEGYIQNYRCRGDDSKVQEARK. The interval 148–156 is phosphatase sequence motif I; sequence KVSIGRLRP. N-linked (GlcNAc...) asparagine glycosylation is present at Asn-170. Residues 182-184 carry the Integrin-binding motif motif; the sequence is RGD. Residues 194-214 traverse the membrane as a helical segment; that stretch reads SFFSGHASFSMYTMLYLVLYL. The interval 196–199 is phosphatase sequence motif II; sequence FSGH. His-199 acts as the Proton donors in catalysis. Over 215-225 the chain is Cytoplasmic; the sequence is QARFTWRGARL. A helical transmembrane segment spans residues 226–243; sequence LRPLLQFTLIMMAFYTGL. Positions 244-255 are phosphatase sequence motif III; the sequence is SRVSDHKHHPSD. Topologically, residues 244–257 are extracellular; sequence SRVSDHKHHPSDVL. The active-site Nucleophile is the His-251. Residues 258-278 form a helical membrane-spanning segment; that stretch reads AGFAQGALVACCIVFFVSDLF. Residues 275 to 311 form a mediates interaction with CTNND1 region; that stretch reads SDLFKTKTTLSLPAPAIRKEILSPVDIIDRNNHHNMM. Over 279–311 the chain is Cytoplasmic; the sequence is KTKTTLSLPAPAIRKEILSPVDIIDRNNHHNMM.

This sequence belongs to the PA-phosphatase related phosphoesterase family. Forms functional homodimers and homooligomers that are not required for substrate recognition and catalytic activity. Can also form heterooligomers with other PLPP2 and PLPP3. Interacts with CTNND1; negatively regulates the PLPP3-mediated stabilization of beta-catenin/CTNNB1. Post-translationally, N-glycosylated. Contains high-mannose oligosaccharides. Ubiquitously expressed. Highly expressed in heart and placenta.

The protein localises to the cell membrane. It is found in the basolateral cell membrane. Its subcellular location is the endoplasmic reticulum membrane. The protein resides in the endoplasmic reticulum-Golgi intermediate compartment membrane. It localises to the golgi apparatus membrane. The protein localises to the golgi apparatus. It is found in the trans-Golgi network membrane. Its subcellular location is the membrane raft. The enzyme catalyses a 1,2-diacyl-sn-glycero-3-phosphate + H2O = a 1,2-diacyl-sn-glycerol + phosphate. It carries out the reaction 1,2-dihexadecanoyl-sn-glycero-3-phosphate + H2O = 1,2-dihexadecanoyl-sn-glycerol + phosphate. The catalysed reaction is 1,2-di-(9Z-octadecenoyl)-sn-glycero-3-phosphate + H2O = 1,2-di-(9Z-octadecenoyl)-sn-glycerol + phosphate. It catalyses the reaction a monoacyl-sn-glycero-3-phosphate + H2O = a monoacylglycerol + phosphate. The enzyme catalyses (9Z)-octadecenoyl-sn-glycero-3-phosphate + H2O = (9Z-octadecenoyl)-glycerol + phosphate. It carries out the reaction sphing-4-enine 1-phosphate + H2O = sphing-4-enine + phosphate. The catalysed reaction is an N-acylsphing-4-enine 1-phosphate + H2O = an N-acylsphing-4-enine + phosphate. It catalyses the reaction N-(octanoyl)-sphing-4-enine-1-phosphate + H2O = N-octanoylsphing-4-enine + phosphate. The enzyme catalyses N-(9Z-octadecenoyl)-ethanolamine phosphate + H2O = N-(9Z-octadecenoyl) ethanolamine + phosphate. It functions in the pathway lipid metabolism; phospholipid metabolism. Magnesium-independent phospholipid phosphatase. Insensitive to N-ethylmaleimide. Inhibited by sphingosine, zinc ions and modestly by propanolol. Its function is as follows. Magnesium-independent phospholipid phosphatase of the plasma membrane that catalyzes the dephosphorylation of a variety of glycerolipid and sphingolipid phosphate esters including phosphatidate/PA, lysophosphatidate/LPA, diacylglycerol pyrophosphate/DGPP, sphingosine 1-phosphate/S1P and ceramide 1-phosphate/C1P. Also acts on N-oleoyl ethanolamine phosphate/N-(9Z-octadecenoyl)-ethanolamine phosphate, a potential physiological compound. Has both an extracellular and an intracellular phosphatase activity, allowing the hydrolysis and the cellular uptake of these bioactive lipid mediators from the milieu, regulating signal transduction in different cellular processes. Through the dephosphorylation of extracellular sphingosine-1-phosphate and the regulation of its extra- and intracellular availability, plays a role in vascular homeostasis, regulating endothelial cell migration, adhesion, survival, proliferation and the production of pro-inflammatory cytokines. By maintaining the appropriate levels of this lipid in the cerebellum, also ensure its proper development and function. Through its intracellular lipid phosphatase activity may act in early compartments of the secretory pathway, regulating the formation of Golgi to endoplasmic reticulum retrograde transport carriers. In terms of biological role, independently of this phosphatase activity may also function in the Wnt signaling pathway and the stabilization of beta-catenin/CTNNB1, thereby regulating cell proliferation, migration and differentiation in angiogenesis or yet in tumor growth. Also plays a role in integrin-mediated cell-cell adhesion in angiogenesis. In Homo sapiens (Human), this protein is Phospholipid phosphatase 3.